The chain runs to 885 residues: DNA mismatch repair protein MutS (885 aa).

626-633 (GPNMGGKS) is an ATP binding site.

Belongs to the DNA mismatch repair MutS family.

This protein is involved in the repair of mismatches in DNA. It is possible that it carries out the mismatch recognition step. This protein has a weak ATPase activity. The sequence is that of DNA mismatch repair protein MutS from Burkholderia orbicola (strain MC0-3).